The primary structure comprises 346 residues: Phenylalanine--tRNA ligase alpha subunit (346 aa).

Glu261 provides a ligand contact to Mg(2+).

This sequence belongs to the class-II aminoacyl-tRNA synthetase family. Phe-tRNA synthetase alpha subunit type 1 subfamily. In terms of assembly, tetramer of two alpha and two beta subunits. Requires Mg(2+) as cofactor.

It localises to the cytoplasm. It catalyses the reaction tRNA(Phe) + L-phenylalanine + ATP = L-phenylalanyl-tRNA(Phe) + AMP + diphosphate + H(+). The chain is Phenylalanine--tRNA ligase alpha subunit from Dehalococcoides mccartyi (strain ATCC BAA-2100 / JCM 16839 / KCTC 5957 / BAV1).